Consider the following 447-residue polypeptide: Signal recognition particle 54 kDa protein (447 aa).

Residues 103–110 (GVQGSGKT), 185–189 (DTAGR), and 245–248 (TKMD) each bind GTP.

Belongs to the GTP-binding SRP family. SRP54 subfamily. As to quaternary structure, part of the signal recognition particle protein translocation system, which is composed of SRP and FtsY. Archaeal SRP consists of a 7S RNA molecule of 300 nucleotides and two protein subunits: SRP54 and SRP19.

It is found in the cytoplasm. It catalyses the reaction GTP + H2O = GDP + phosphate + H(+). Its function is as follows. Involved in targeting and insertion of nascent membrane proteins into the cytoplasmic membrane. Binds to the hydrophobic signal sequence of the ribosome-nascent chain (RNC) as it emerges from the ribosomes. The SRP-RNC complex is then targeted to the cytoplasmic membrane where it interacts with the SRP receptor FtsY. This Saccharolobus islandicus (strain Y.N.15.51 / Yellowstone #2) (Sulfolobus islandicus) protein is Signal recognition particle 54 kDa protein.